The primary structure comprises 535 residues: Endogenous retrovirus group V member 2 Env polyprotein (535 aa).

Residues 1–21 form the signal peptide; the sequence is MTEKFLFLYLSLLPMPLLSQA. Residues 22-321 are Extracellular-facing; that stretch reads QWNENSLVSF…NTTQPRQKRA (300 aa). N68 carries N-linked (GlcNAc...) asparagine glycosylation. The helical transmembrane segment at 322–342 threads the bilayer; that stretch reads LGLILAGMGAAIGMIAPWGGF. The Cytoplasmic segment spans residues 343–456; that stretch reads TYHDVTLRNL…VKSALPSLNW (114 aa). The chain crosses the membrane as a helical span at residues 457–477; that stretch reads FVPLLGPATVILLLFLFGPCF. Residues 478-535 lie on the Extracellular side of the membrane; that stretch reads FNLLIKCVSSRIKQFHMKSPQMERYQLSVIGGPSTYKHISPLDASGQRFRETMEEFSL.

Belongs to the gamma type-C retroviral envelope protein family. As to expression, expressed in placenta.

The protein localises to the membrane. The sequence is that of Endogenous retrovirus group V member 2 Env polyprotein (ERVV-2) from Homo sapiens (Human).